The sequence spans 53 residues: Conotoxin Ac4.3b (53 aa).

Residues 1-11 (SDVRNAAVHER) constitute a propeptide that is removed on maturation. Gln-12 bears the Pyrrolidone carboxylic acid mark. Glu-14 is subject to 4-carboxyglutamate. Residue Ser-18 is glycosylated (O-linked (HexNAc...) serine). 4-hydroxyproline is present on residues Pro-28, Pro-33, and Pro-48. Proline amide is present on Pro-48. Residues 49-53 (GRRND) constitute a propeptide that is removed on maturation.

The protein belongs to the conotoxin A superfamily. Contains 3 disulfide bonds. Expressed by the venom duct.

The protein resides in the secreted. Functionally, probable neurotoxin with ion channel inhibitor activity. This Conus achatinus (Little frog cone) protein is Conotoxin Ac4.3b.